A 519-amino-acid polypeptide reads, in one-letter code: LysM domain-containing protein ARB_03442 (519 aa).

The first 19 residues, 1-19 (MGQLKQLAGILALASPAIA), serve as a signal peptide directing secretion. Asn47 carries N-linked (GlcNAc...) asparagine glycosylation. One can recognise a LysM domain in the interval 312-358 (KYYNVVAGDTCASISSEFEVTMDELLTYNPELHPNCENLWANFAICV). The lysM domain stretch occupies residues 314–358 (YNVVAGDTCASISSEFEVTMDELLTYNPELHPNCENLWANFAICV). Over residues 407–416 (PDAPDAQGQT) the composition is skewed to low complexity. Residues 407–458 (PDAPDAQGQTVHDDEPPEEPHIEEPPKDIPAGDDDDRKKAKLPLPSGKYPLP) form a disordered region. The span at 417–433 (VHDDEPPEEPHIEEPPK) shows a compositional bias: basic and acidic residues. N-linked (GlcNAc...) asparagine glycosylation occurs at Asn460. Residues 467–510 (DGSCNEYISCVGSPFGVCCSTSGWCGYGKPWCGVGNCVSGYCDT) form the Chitin-binding type-1 domain. Disulfide bonds link Cys470/Cys485, Cys476/Cys491, Cys484/Cys498, and Cys503/Cys508.

The protein resides in the secreted. Might have a role in sequestration of chitin oligosaccharides (breakdown products of fungal cell walls that are released during invasion and act as triggers of host immunity) to dampen host defense. The polypeptide is LysM domain-containing protein ARB_03442 (Arthroderma benhamiae (strain ATCC MYA-4681 / CBS 112371) (Trichophyton mentagrophytes)).